A 473-amino-acid chain; its full sequence is tRNA-2-methylthio-N(6)-dimethylallyladenosine synthase (473 aa).

An MTTase N-terminal domain is found at 5–125; it reads RKLHIKSFGC…LPQLLAEAAR (121 aa). Positions 14, 50, 88, 166, 170, and 173 each coordinate [4Fe-4S] cluster. The Radical SAM core domain maps to 152-384; that stretch reads RARGISAFVT…QELIDSQQAA (233 aa). Positions 387–449 constitute a TRAM domain; that stretch reads AAVIGTTVEV…RYSLIGELAA (63 aa). Residues 452–473 are disordered; the sequence is QHSGFATRSEDSPQSLPITTGA.

Belongs to the methylthiotransferase family. MiaB subfamily. Monomer. It depends on [4Fe-4S] cluster as a cofactor.

The protein resides in the cytoplasm. It catalyses the reaction N(6)-dimethylallyladenosine(37) in tRNA + (sulfur carrier)-SH + AH2 + 2 S-adenosyl-L-methionine = 2-methylsulfanyl-N(6)-dimethylallyladenosine(37) in tRNA + (sulfur carrier)-H + 5'-deoxyadenosine + L-methionine + A + S-adenosyl-L-homocysteine + 2 H(+). In terms of biological role, catalyzes the methylthiolation of N6-(dimethylallyl)adenosine (i(6)A), leading to the formation of 2-methylthio-N6-(dimethylallyl)adenosine (ms(2)i(6)A) at position 37 in tRNAs that read codons beginning with uridine. This chain is tRNA-2-methylthio-N(6)-dimethylallyladenosine synthase, found in Rhodopseudomonas palustris (strain BisB18).